A 353-amino-acid polypeptide reads, in one-letter code: UPF0283 membrane protein YcjF (353 aa).

Helical transmembrane passes span 70–90 (MVMG…IQWT), 100–120 (VALG…GSVV), and 213–233 (ESTL…FIAW).

The protein belongs to the UPF0283 family.

Its subcellular location is the cell inner membrane. This chain is UPF0283 membrane protein YcjF, found in Shigella flexneri serotype 5b (strain 8401).